The following is a 388-amino-acid chain: Ribonuclease D (388 aa).

In terms of domain architecture, 3'-5' exonuclease spans 7–173 (ITDSKTLAQF…QIFPKMLEEL (167 aa)). Residues 212–293 (KADVLGRLKA…ASHAPLAKEE (82 aa)) enclose the HRDC domain.

Belongs to the RNase D family. The cofactor is a divalent metal cation.

It is found in the cytoplasm. The catalysed reaction is Exonucleolytic cleavage that removes extra residues from the 3'-terminus of tRNA to produce 5'-mononucleotides.. Functionally, exonuclease involved in the 3' processing of various precursor tRNAs. Initiates hydrolysis at the 3'-terminus of an RNA molecule and releases 5'-mononucleotides. The protein is Ribonuclease D of Sphingobium indicum (strain DSM 16413 / CCM 7287 / MTCC 6362 / UT26 / NBRC 101211 / UT26S) (Sphingobium japonicum).